A 339-amino-acid polypeptide reads, in one-letter code: Protein RecA (339 aa).

74–81 (GPESSGKT) lines the ATP pocket.

The protein belongs to the RecA family.

It localises to the cytoplasm. In terms of biological role, can catalyze the hydrolysis of ATP in the presence of single-stranded DNA, the ATP-dependent uptake of single-stranded DNA by duplex DNA, and the ATP-dependent hybridization of homologous single-stranded DNAs. It interacts with LexA causing its activation and leading to its autocatalytic cleavage. In Phytoplasma mali (strain AT), this protein is Protein RecA.